A 214-amino-acid chain; its full sequence is CASP-like protein UU5 (214 aa).

The disordered stretch occupies residues 1-20 (MSTVAQDSAPGGGKIQDAME). Residues 1-57 (MSTVAQDSAPGGGKIQDAMEQGAPGASSAAVVPEGGHYTQTPSPAFQAVKKNINHMS) are Cytoplasmic-facing. A helical transmembrane segment spans residues 58–78 (AFSLGLRVAEFVLSVIAFSLM). The Extracellular segment spans residues 79–99 (ASADQNGAVYSTFTSYSFVLA). The chain crosses the membrane as a helical span at residues 100–120 (VNVLVVFYTIGQIIMSVLLLV). The Cytoplasmic portion of the chain corresponds to 121 to 138 (SGSTPKKIYLFITFGCDQ). Residues 139–159 (LSAFLLMAAGAAGASVALIIN) form a helical membrane-spanning segment. Over 160–193 (RGGVTDAYGNGCIDGKITSFCSHAQASVAFTFLS) the chain is Extracellular. The chain crosses the membrane as a helical span at residues 194-214 (FFCMVISSLLGVYSLAPYLIL).

This sequence belongs to the Casparian strip membrane proteins (CASP) family. As to quaternary structure, homodimer and heterodimers.

It localises to the cell membrane. The sequence is that of CASP-like protein UU5 from Physcomitrium patens (Spreading-leaved earth moss).